The sequence spans 504 residues: UDP-N-acetylmuramoylalanine--D-glutamate ligase (504 aa).

Gly129–Thr135 is an ATP binding site.

The protein belongs to the MurCDEF family.

The protein localises to the cytoplasm. It catalyses the reaction UDP-N-acetyl-alpha-D-muramoyl-L-alanine + D-glutamate + ATP = UDP-N-acetyl-alpha-D-muramoyl-L-alanyl-D-glutamate + ADP + phosphate + H(+). It functions in the pathway cell wall biogenesis; peptidoglycan biosynthesis. Its function is as follows. Cell wall formation. Catalyzes the addition of glutamate to the nucleotide precursor UDP-N-acetylmuramoyl-L-alanine (UMA). This is UDP-N-acetylmuramoylalanine--D-glutamate ligase from Cupriavidus metallidurans (strain ATCC 43123 / DSM 2839 / NBRC 102507 / CH34) (Ralstonia metallidurans).